A 418-amino-acid polypeptide reads, in one-letter code: MSKVDLNKETGPREVFCGLTSIVWLHRRMPDAFFLVVGSRTCAHLIQSAAGVMIFAEPRFGTAILEEKDLAGLADAHEELDRVVNDLISRRPEIKTLFLVGSCPSEVIKLDLATVAEKLNSRFLGQVRFVNYSGSGIETTFTQGEDGALKALVPLMESTDDEKLLLVGTLANNVEDRFKKIFNNIGITNVESFPPRQSTELPKIGKNTKVLLAQPYLSDTVRDLKHRGCGIIQAPFPLGVEGSTKWVLAAAAAFKIHELKVHEVIAPLANRARQAIEKHKEILRGKKLFLLPESQLEISLARFLHNECEMELIEVGTPYLNRDLMEEELNLLPDDTKIVEGQHVEKQLDRVRASNPDLVVCGMGLANPLEAEGISTKWSIEMVFSPIHGIDQAADLAGLFSRPLTRNQILTSKSLATH.

Residues C17, C42, and C103 each contribute to the [4Fe-4S] cluster site.

It belongs to the BchN/ChlN family. Protochlorophyllide reductase is composed of three subunits; ChlL, ChlN and ChlB. Forms a heterotetramer of two ChlB and two ChlN subunits. Requires [4Fe-4S] cluster as cofactor.

It catalyses the reaction chlorophyllide a + oxidized 2[4Fe-4S]-[ferredoxin] + 2 ADP + 2 phosphate = protochlorophyllide a + reduced 2[4Fe-4S]-[ferredoxin] + 2 ATP + 2 H2O. Its pathway is porphyrin-containing compound metabolism; chlorophyll biosynthesis (light-independent). Its function is as follows. Component of the dark-operative protochlorophyllide reductase (DPOR) that uses Mg-ATP and reduced ferredoxin to reduce ring D of protochlorophyllide (Pchlide) to form chlorophyllide a (Chlide). This reaction is light-independent. The NB-protein (ChlN-ChlB) is the catalytic component of the complex. The chain is Light-independent protochlorophyllide reductase subunit N from Prochlorococcus marinus subsp. pastoris (strain CCMP1986 / NIES-2087 / MED4).